Here is a 246-residue protein sequence, read N- to C-terminus: 33kDa venom protein (246 aa).

A signal peptide spans 1-20; sequence MAGKEVIFIMALFIAVESSP. Tandem repeats lie at residues 83-96, 97-110, 111-124, 125-138, 139-152, 153-166, and 167-180. The interval 83–243 is 12 X approximate tandem repeats of [AV][DE]X[VL]SGSX[DE]QX[KR]X[ST]; sequence GGAVSESVKQ…SGSVGNDDDI (161 aa). The segment at 88–246 is disordered; that stretch reads ESVKQKRETA…VGNDDDISVQ (159 aa). The segment covering 112–123 has biased composition (polar residues); that stretch reads ENLSGSFDQQKS. Basic and acidic residues predominate over residues 175 to 186; that stretch reads DKQKVTVEEKSE. The stretch at 181 to 187 is one 8; half-length repeat; that stretch reads VEEKSEP. A run of 4 repeats spans residues 188–201, 202–215, 216–229, and 230–243. Polar residues predominate over residues 217-228; sequence ESLSGSFDQQKS.

As to expression, expressed by the venom gland.

It localises to the secreted. The chain is 33kDa venom protein from Chelonus sp. nr. curvimaculatus (Parasitic wasp).